Reading from the N-terminus, the 249-residue chain is 2,3-bisphosphoglycerate-dependent phosphoglycerate mutase (249 aa).

Residues 8-15 (RHGESIWN), 21-22 (TG), arginine 60, 87-90 (ERHY), lysine 98, 114-115 (RR), and 183-184 (GN) each bind substrate. Residue histidine 9 is the Tele-phosphohistidine intermediate of the active site. The active-site Proton donor/acceptor is glutamate 87.

Belongs to the phosphoglycerate mutase family. BPG-dependent PGAM subfamily.

The enzyme catalyses (2R)-2-phosphoglycerate = (2R)-3-phosphoglycerate. It functions in the pathway carbohydrate degradation; glycolysis; pyruvate from D-glyceraldehyde 3-phosphate: step 3/5. Catalyzes the interconversion of 2-phosphoglycerate and 3-phosphoglycerate. This is 2,3-bisphosphoglycerate-dependent phosphoglycerate mutase from Caldanaerobacter subterraneus subsp. tengcongensis (strain DSM 15242 / JCM 11007 / NBRC 100824 / MB4) (Thermoanaerobacter tengcongensis).